Consider the following 252-residue polypeptide: Probable endonuclease 4 (252 aa).

Positions 56, 96, 129, 162, 165, 191, 204, 206, and 233 each coordinate Zn(2+).

This sequence belongs to the AP endonuclease 2 family. Zn(2+) serves as cofactor.

It carries out the reaction Endonucleolytic cleavage to 5'-phosphooligonucleotide end-products.. Its function is as follows. Endonuclease IV plays a role in DNA repair. It cleaves phosphodiester bonds at apurinic or apyrimidinic (AP) sites, generating a 3'-hydroxyl group and a 5'-terminal sugar phosphate. The chain is Probable endonuclease 4 from Mycobacterium marinum (strain ATCC BAA-535 / M).